A 298-amino-acid chain; its full sequence is DDRGK domain-containing protein 1 (298 aa).

Residues 1–21 (MDIVLYFVAVPILIVLIVSAV) form a helical membrane-spanning segment. At 22–298 (KVRGKTEEDN…NLIPEIHNTA (277 aa)) the chain is on the cytoplasmic side. A disordered region spans residues 71–149 (NSAYREAADN…EERRKEDKKE (79 aa)). Residues 82–94 (SPVEVEEEYEEAE) show a composition bias toward acidic residues. Residues 110 to 149 (KLEEKQAKRAQREAELEEREERKRTQELREEERRKEDKKE) show a composition bias toward basic and acidic residues. Positions 181-195 (SFVVEEQGEADELTE) match the UFM1-interacting motif (UFIM) motif. The PCI domain occupies 215–259 (VLLEDLASHFGLRTQDAISRLQDLLSDGSITGVIDDRGKFIFITP).

This sequence belongs to the DDRGK1 family. Component of the UFM1 ribosome E3 ligase (UREL) complex, composed of ufl1, ddrgk1 and cdk5rap3.

Its subcellular location is the endoplasmic reticulum membrane. In terms of biological role, component of the UFM1 ribosome E3 ligase (UREL) complex, a multiprotein complex that catalyzes ufmylation of endoplasmic reticulum-docked proteins. The UREL complex plays a key role in ribosome recycling by mediating mono-ufmylation of the RPL26/uL24 subunit of the 60S ribosome following ribosome dissociation: ufmylation weakens the junction between post-termination 60S subunits and SEC61 translocons, promoting release and recycling of the large ribosomal subunit from the endoplasmic reticulum membrane. Ufmylation of RPL26/uL24 and subsequent 60S ribosome recycling either take place after normal termination of translation or after ribosome stalling during cotranslational translocation at the endoplasmic reticulum. Within the UREL complex, DDRGK1 tethers the complex to the endoplasmic reticulum membrane to restrict its activity to endoplasmic reticulum-docked ribosomes and acts as an ufmylation 'reader': following RPL26/uL24 ufmylation, DDRGK1 specifically binds to ufmylated RPL26/uL24 via its UFIM motif, resulting in stable association between the 60S ribosome and the UREL complex, followed by dissociation of the 60S ribosome subunit from the endoplasmic reticulum membrane. The UREL complex is also involved in reticulophagy in response to endoplasmic reticulum stress by promoting ufmylation of proteins such as CYB5R3 and RPN1, thereby promoting lysosomal degradation of ufmylated proteins. Required for stabilization and ufmylation of ATG9A. This chain is DDRGK domain-containing protein 1, found in Osmerus mordax (Rainbow smelt).